Consider the following 113-residue polypeptide: Putative anti-sigma factor antagonist TM1081 homolog (113 aa).

In terms of domain architecture, STAS spans 1 to 110 (MFPYKIVEDV…DTISEALEEV (110 aa)). Residue Ser-55 is modified to Phosphoserine.

This sequence belongs to the anti-sigma-factor antagonist family. Phosphorylated on a serine residue.

In terms of biological role, in the phosphorylated form it could act as an anti-anti-sigma factor that counteracts an anti-sigma factor and thus releases a sigma factor from inhibition. The chain is Putative anti-sigma factor antagonist TM1081 homolog from Thermotoga neapolitana.